A 192-amino-acid polypeptide reads, in one-letter code: MKNKVVVVTGVPGVGGTTVTQKAMDILSEEGLNYKMVNFGSAMFEVANEEGLASDRDQMRKLDPETQKRIQKMAGRKIAEMAKEYPVAVDTHSTVKTPKGYLPGLPAWVLTELNPDMVIVVETDGDEILMRRLSDESRKRDLETTASIEEHQFMNRAAAMSYGVLTGATVKIVKNKNGLVDNAVEELISVLR.

Residue 10–18 (GVPGVGGTT) coordinates ATP.

It belongs to the archaeal adenylate kinase family. In terms of assembly, monomer.

The protein resides in the cytoplasm. The catalysed reaction is AMP + ATP = 2 ADP. In Methanococcus maripaludis (strain C7 / ATCC BAA-1331), this protein is Adenylate kinase.